Here is a 195-residue protein sequence, read N- to C-terminus: Myelin basic protein (195 aa).

N-acetylalanine is present on alanine 2. A phosphoserine mark is found at serine 8 and serine 13. The residue at position 15 (tyrosine 15) is a Phosphotyrosine. Threonine 18 bears the Phosphothreonine mark. Serine 20 carries the phosphoserine modification. Threonine 21 bears the Phosphothreonine mark. A citrulline mark is found at arginine 26 and arginine 32. Threonine 36 is modified (phosphothreonine). Position 41 is a phosphoserine (serine 41). Residues arginine 44 and arginine 50 each carry the omega-N-methylarginine modification. The disordered stretch occupies residues 45 to 79 (FFSGDRGAPKRGSGKVPWLKQSRSPLPSHARSRPG). Serine 57 carries the phosphoserine modification. The residue at position 92 (threonine 92) is a Phosphothreonine. Tyrosine 94 carries the post-translational modification Phosphotyrosine. Serine 101 is modified (phosphoserine). Residues threonine 104, threonine 119, and threonine 122 each carry the phosphothreonine modification. A disordered region spans residues 117–139 (IVTPRTPPPSQGKGRGLSLSRFS). The residue at position 127 (glutamine 127) is a Deamidated glutamine. Residue arginine 131 is modified to Omega-N-methylarginine; alternate. At arginine 131 the chain carries Symmetric dimethylarginine; alternate. Position 139 is a phosphoserine (serine 139). Lysine 146 carries the post-translational modification N6-acetyllysine. Arginine 154 carries the post-translational modification Citrulline. At glutamine 172 the chain carries Deamidated glutamine. Citrulline is present on arginine 184. Position 186 is a phosphoserine (serine 186). Serine 190 is subject to Phosphoserine; by UHMK1. Position 195 is a citrulline (arginine 195).

This sequence belongs to the myelin basic protein family. As to quaternary structure, homodimer. As in other animals, several charge isomers may be produced as a result of optional post-translational modifications, such as phosphorylation of serine or threonine residues, deamidation of glutamine or asparagine residues, citrullination and methylation of arginine residues. In terms of processing, arg-131 was found to be 44% monomethylated and 11% symmetrically dimethylated. Post-translationally, phosphorylated by TAOK2, VRK2, MAPK11, MAPK12, MAPK14 and MINK1. Proteolytically cleaved in B cell lysosomes by cathepsin CTSG which degrades the major immunogenic MBP epitope and prevents the activation of MBP-specific autoreactive T cells. Found in both the central and the peripheral nervous system.

The protein resides in the myelin membrane. Is, with PLP, the most abundant protein component of the myelin membrane in the CNS. Has a role in both the formation and stabilization of this compact multilayer arrangement of bilayers. Each splice variant and charge isomer may have a specialized function in the assembly of an optimized, biochemically functional myelin membrane. The chain is Myelin basic protein (Mbp) from Rattus norvegicus (Rat).